The chain runs to 827 residues: MVHSKKDKSVMKHSDIKKRGAAVLEEEDVLQQDEQLLVDGATIDCDSDDDEEFQSAEEEVLSSGSESSSKEGSTPGSPVEGSDEEAEDEDADEEEDEDAEFNRLLAAEEGDSEGEYGSEDFSDDNDTRPLREKLSSMQLKMIPDGESASVKTRYSDGTPRIIKPEITPVYDSDDTDVETANTIGNIPLSAYDEMPHIGYDINGKRIMRPAKGSALDALLDTIELPEGWTGLLDQNTGSSLNLTPEELDLISKIQKNEQVDDSVDPYEPYVDWFTRHEEIMPVTAIPEPKRRFVPSKHEAKRIMKIVKAIREGRIIPPNKLRELREQEQANNFSYDLWGDSEETNEHIMNLRAPKLPPPTNEESYNPPEEYLLTPEERAEWEKMDPSDRKRNFLPQKYGSLRKVPGYGESVRERFERSLDLYLAPRVRKNKLNIDPESLIPELPSPKDLRPFPIRCSTVYAGHKGKIRTLSIDPSGLWLATGSDDGTVRVWEILTGREVYKATIVDIKNNQDDHIETVEWNPDKTVGLLAVAAGENIYLLVPPIFGFEVENNSRLKIENGYGFDTFGNVKKSALNVNSDDEQAETEATVKKQVAQWNKPTQKQAENDVAIVITCRKTVKKISWHRKGDYFVSVQPESGHTSVLIHQLSKHLTQSPFNKSKGIIMDAKFHPFKPQLFVCSQRYIRIYDLSQQVLVKKLLPGARWLSTIDIHPRGDNLIASSFDKRVLWHDLDLAATPYKTLRYHEKAVRSVGFHKKLPLFCSAADDGTIHVFHGTVYDDMMKNPLLVPLKKLTGHKLVNSLGVLDTVWHPREAWLFSAGADNTARLWTT.

The interval 1-129 (MVHSKKDKSV…DFSDDNDTRP (129 aa)) is disordered. Basic and acidic residues predominate over residues 7-18 (DKSVMKHSDIKK). Residues 45-60 (CDSDDDEEFQSAEEEV) show a composition bias toward acidic residues. The span at 61-77 (LSSGSESSSKEGSTPGS) shows a compositional bias: low complexity. Composition is skewed to acidic residues over residues 81-99 (GSDEEAEDEDADEEEDEDA) and 108-124 (EEGDSEGEYGSEDFSDD). The interval 291–409 (RFVPSKHEAK…LRKVPGYGES (119 aa)) is required for interaction with NOP7. A required for interaction with YTM1 region spans residues 409–445 (SVRERFERSLDLYLAPRVRKNKLNIDPESLIPELPSP). 6 WD repeats span residues 461 to 500 (GHKGKIRTLSIDPSGLWLATGSDDGTVRVWEILTGREVYK), 509 to 549 (NQDD…FEVE), 657 to 695 (KSKGIIMDAKFHPFKPQLFVCSQRYIRIYDLSQQVLVKK), 698 to 737 (PGARWLSTIDIHPRGDNLIASSFDKRVLWHDLDLAATPYK), 741 to 780 (YHEKAVRSVGFHKKLPLFCSAADDGTIHVFHGTVYDDMMK), and 796 to 827 (VNSLGVLDTVWHPREAWLFSAGADNTARLWTT).

The protein belongs to the WD repeat BOP1/ERB1 family. As to quaternary structure, component of the NOP7 complex, composed of ERB1, NOP7 and YTM1. The complex is held together by ERB1, which interacts with NOP7 via its N-terminal domain and with YTM1 via a high-affinity interaction between the seven-bladed beta-propeller domains of the 2 proteins. The NOP7 complex associates with the 66S pre-ribosome.

The protein localises to the nucleus. The protein resides in the nucleolus. It localises to the nucleoplasm. Component of the NOP7 complex, which is required for maturation of the 25S and 5.8S ribosomal RNAs and formation of the 60S ribosome. This Eremothecium gossypii (strain ATCC 10895 / CBS 109.51 / FGSC 9923 / NRRL Y-1056) (Yeast) protein is Ribosome biogenesis protein ERB1.